The primary structure comprises 512 residues: MAVDKLPLLAKFEPVSLVGLVLLSGLFLLLTASRKSDLPLVNGKRPFEFGIAKARQRYLKNAHNLITAGLAKVCNSAGAFRIVTENGTRTILSPNYADDIRSHRDLSLSAALVKEHHVNIAGFDAVKVTVTSDIIQDTVRTKLTQNLLNITEPMSEEATILLKEQWTDNTDWHDVALRPKTLGIVAQLSSRVFLGDKVCRNPDWLRITVNYTIDSLMAAAELRLWPEMLRPLAARFLPKCKKIRKQLEEARDIIQPVIDERRLAQQEAIKQGKPQERYHDAIQWLAENTKDRSFEPAAMQLALSTAAIHTTTDLLGQTVLDLCGRDELIQELREEIISVFKDGSWDKSTMYKLKLMDSVIKESQRVKPMAIAKMARCAEEDVKLSDGTIIPKGEIILVSCSKMWDANVYPDPNTFDPHRFLKMRQPGSDQESFAQLVSPSPEHMGFGFGKHACPGRFFAAAELKVALCHIIMKYDFKVADGCNPQVLKSGMRLAADPFAKIAIRRRQEEVTF.

Residues 12 to 32 traverse the membrane as a helical segment; that stretch reads FEPVSLVGLVLLSGLFLLLTA. Residues asparagine 86, asparagine 149, and asparagine 210 are each glycosylated (N-linked (GlcNAc...) asparagine). Cysteine 453 is a heme binding site.

This sequence belongs to the cytochrome P450 family. Requires heme as cofactor.

It localises to the membrane. It functions in the pathway secondary metabolite biosynthesis; terpenoid biosynthesis. Functionally, cytochrome P450 monooxygenase; part of the gene cluster that mediates the biosynthesis of andrastins, meroterpenoid compounds that exhibit inhibitory activity against ras farnesyltransferase, suggesting that they could be promising leads for antitumor agents. The first step of the pathway is the synthesis of 3,5-dimethylorsellinic acid (DMOA) by the polyketide synthase adrD via condensation of one acetyl-CoA starter unit with 3 malonyl-CoA units and 2 methylations. DMAO is then converted to farnesyl-DMAO by the prenyltransferase adrG. The methyltransferase adrK catalyzes the methylation of the carboxyl group of farnesyl-DMAO to farnesyl-DMAO methyl ester which is further converted to epoxyfarnesyl-DMAO methyl ester by the FAD-dependent monooxygenase adrH. The terpene cyclase adrI then catalyzes the carbon skeletal rearrangement to generate the andrastin E, the first compound in the pathway having the andrastin scaffold, with the tetracyclic ring system. The post-cyclization tailoring enzymes adrF, adrE, adrJ, and adrA, are involved in the conversion of andrastin E into andrastin A. The short chain dehydrogenase adrF is responsible for the oxidation of the C-3 a hydroxyl group of andrastin E to yield the corresponding ketone, andrastin D. The ketoreductase adrE stereoselectively reduces the carbonyl moiety to reverse the stereochemistry of the C-3 position to yield andrastin F. The acetyltransferase adrJ is the acetyltransferase that attaches the acetyl group to the C-3 hydroxyl group of andrastin F to yield andrastin C. Finally, the cytochrome P450 monooxygenase adrA catalyzes two sequential oxidation reactions of the C-23 methyl group, to generate the corresponding alcohol andrastin B, and aldehyde andrastin A. In Penicillium rubens (strain ATCC 28089 / DSM 1075 / NRRL 1951 / Wisconsin 54-1255) (Penicillium chrysogenum), this protein is Cytochrome P450 monooxygenase adrA.